Reading from the N-terminus, the 293-residue chain is N-acetylneuraminate lyase (293 aa).

The aceneuramate site is built by S47 and T48. Y136 serves as the catalytic Proton donor. The active-site Schiff-base intermediate with substrate is K164. Aceneuramate-binding residues include T166, G188, D190, E191, and S207.

It belongs to the DapA family. NanA subfamily. Homotetramer.

Its subcellular location is the cytoplasm. The catalysed reaction is aceneuramate = aldehydo-N-acetyl-D-mannosamine + pyruvate. It participates in amino-sugar metabolism; N-acetylneuraminate degradation; D-fructose 6-phosphate from N-acetylneuraminate: step 1/5. In terms of biological role, catalyzes the reversible aldol cleavage of N-acetylneuraminic acid (sialic acid; Neu5Ac) to form pyruvate and N-acetylmannosamine (ManNAc) via a Schiff base intermediate. This Haemophilus influenzae (strain ATCC 51907 / DSM 11121 / KW20 / Rd) protein is N-acetylneuraminate lyase.